The chain runs to 534 residues: CTP synthase (534 aa).

Residues 1–267 (MSKYIVVTGG…GSYILNRLNI (267 aa)) are amidoligase domain. Residue Ser13 coordinates CTP. Residue Ser13 coordinates UTP. ATP is bound at residue 14–19 (SIGKGI). Tyr54 contacts L-glutamine. Asp71 serves as a coordination point for ATP. Mg(2+) contacts are provided by Asp71 and Glu141. CTP is bound by residues 148–150 (DIE), 188–193 (KTKPTQ), and Lys224. Residues 188 to 193 (KTKPTQ) and Lys224 each bind UTP. Positions 294–532 (KIAVVGKYIE…IKAAKNKKQN (239 aa)) constitute a Glutamine amidotransferase type-1 domain. Gly353 contacts L-glutamine. The Nucleophile; for glutamine hydrolysis role is filled by Cys380. L-glutamine-binding positions include 381–384 (LGLH), Glu403, and Arg460. Active-site residues include His505 and Glu507.

This sequence belongs to the CTP synthase family. As to quaternary structure, homotetramer.

It catalyses the reaction UTP + L-glutamine + ATP + H2O = CTP + L-glutamate + ADP + phosphate + 2 H(+). The enzyme catalyses L-glutamine + H2O = L-glutamate + NH4(+). The catalysed reaction is UTP + NH4(+) + ATP = CTP + ADP + phosphate + 2 H(+). It participates in pyrimidine metabolism; CTP biosynthesis via de novo pathway; CTP from UDP: step 2/2. With respect to regulation, allosterically activated by GTP, when glutamine is the substrate; GTP has no effect on the reaction when ammonia is the substrate. The allosteric effector GTP functions by stabilizing the protein conformation that binds the tetrahedral intermediate(s) formed during glutamine hydrolysis. Inhibited by the product CTP, via allosteric rather than competitive inhibition. In terms of biological role, catalyzes the ATP-dependent amination of UTP to CTP with either L-glutamine or ammonia as the source of nitrogen. Regulates intracellular CTP levels through interactions with the four ribonucleotide triphosphates. This is CTP synthase from Methanosphaera stadtmanae (strain ATCC 43021 / DSM 3091 / JCM 11832 / MCB-3).